Consider the following 343-residue polypeptide: Tetraacyldisaccharide 4'-kinase (343 aa).

61-68 (GVGGNGKT) serves as a coordination point for ATP.

Belongs to the LpxK family.

The enzyme catalyses a lipid A disaccharide + ATP = a lipid IVA + ADP + H(+). It functions in the pathway glycolipid biosynthesis; lipid IV(A) biosynthesis; lipid IV(A) from (3R)-3-hydroxytetradecanoyl-[acyl-carrier-protein] and UDP-N-acetyl-alpha-D-glucosamine: step 6/6. Transfers the gamma-phosphate of ATP to the 4'-position of a tetraacyldisaccharide 1-phosphate intermediate (termed DS-1-P) to form tetraacyldisaccharide 1,4'-bis-phosphate (lipid IVA). The chain is Tetraacyldisaccharide 4'-kinase from Colwellia psychrerythraea (strain 34H / ATCC BAA-681) (Vibrio psychroerythus).